A 165-amino-acid polypeptide reads, in one-letter code: Hemolysin, heat labile (165 aa).

A disulfide bridge links Cys151 with Cys161.

The protein belongs to the TDH hemolysin family. As to quaternary structure, homodimer.

Bacterial hemolysins are exotoxins that attack blood cell membranes and cause cell rupture by mechanisms not clearly defined. This chain is Hemolysin, heat labile, found in Grimontia hollisae (Vibrio hollisae).